Reading from the N-terminus, the 758-residue chain is MNGNNNTGNLQQSHGPPQQQQQQQMFNQTPQMGFQQAPPPGMQGRGNNAQTPLQQQRFNMSQQQMMAAQQQQQQQQLQQQNAMAAAAAAAAASGRPVPQRNPNYNGSPNPGQTLPLNNNNNNSNNNNNKTGMYNPNALATGMPSSNLQPTSSAGNSRGHTPRMVNQPQPFIPHQQNQPPLPPQQQQQQQQQQQQPTPQLPPQGQTPQQVQMGYPKKVNNGNLVANQSLKSGPMGGPVPMGGPQQARIPPNSSFQQSPQTQFAMPPNSNGPINPQQQQQQHGPNQNPQPTVSGRSPIQRQMIIATTTATGGKGDTNNSVQEQVQQEINTRIIKRNLGNAAIIRVLDLIEFISNQHYENLSNIEFWTKITPANFLPTAILKFNTTNITGGNGNKSLNDITGLNLNFLNSNKATSNNNNNNTNTNTNNSNNNNKPHQFELTTSTAPRFFASCIQTESILKCNISLSGSKFQVLSNGSIVIVSKIGLHFHYKDGSNSALHGTIKILMSKDLRIEWVDLNFSDYQSNISVSALEEKLKSIITDNTSITKKDIKRQKELLDELVKNSQASKLQLTFGIEPQSLRILQLGDVMSSMKSLMEFSMVNNIPSPMKSMELLIASQKNQQMQAFQAQMAVQAQAQAQAQVQAQAQGQNLANFSGSTNLQTDAQRSRQQQQQQQQQQQQQQQQQSLNTSNNNSNSNNSNNNNNNNSNNNNNNNNNNNGKGGIANGSNNISSPSPRTVNAEEPKRKRKQSVNMSNENKRRK.

The segment covering 1 to 10 (MNGNNNTGNL) has biased composition (polar residues). Disordered regions lie at residues 1–49 (MNGN…GNNA), 87–293 (AAAA…VSGR), 408–433 (NKATSNNNNNNTNTNTNNSNNNNKPH), and 650–758 (NFSG…KRRK). The span at 11 to 31 (QQSHGPPQQQQQQQMFNQTPQ) shows a compositional bias: low complexity. Polar residues predominate over residues 100-116 (RNPNYNGSPNPGQTLPL). Low complexity predominate over residues 117–128 (NNNNNNSNNNNN). The span at 142–168 (MPSSNLQPTSSAGNSRGHTPRMVNQPQ) shows a compositional bias: polar residues. The span at 183 to 210 (QQQQQQQQQQQQPTPQLPPQGQTPQQVQ) shows a compositional bias: low complexity. 2 stretches are compositionally biased toward polar residues: residues 218–229 (NNGNLVANQSLK) and 249–261 (PNSSFQQSPQTQF). 2 stretches are compositionally biased toward low complexity: residues 264–288 (PPNSNGPINPQQQQQQHGPNQNPQP) and 408–430 (NKATSNNNNNNTNTNTNNSNNNN). Polar residues predominate over residues 650 to 665 (NFSGSTNLQTDAQRSR). Over residues 666–715 (QQQQQQQQQQQQQQQQQSLNTSNNNSNSNNSNNNNNNNSNNNNNNNNNNN) the composition is skewed to low complexity. Polar residues predominate over residues 722 to 734 (NGSNNISSPSPRT).

Belongs to the MFG1 family. As to quaternary structure, interacts with FLO8 and MSS11, both morphogenetic transcription factors binding directly to the FLO11 promoter.

It is found in the nucleus. Functionally, transcriptional regulator with a general role in all morphogenetically distinct forms of filamentous growth, namely invasive growth and biofilm formation. May control FLO11 gene expression as part of a promoter-bound complex with FLO8 and MSS1. Important for virulence. The polypeptide is Morphogenetic regulator of filamentous growth protein 1 (MFG1) (Candida albicans (strain SC5314 / ATCC MYA-2876) (Yeast)).